Consider the following 251-residue polypeptide: DNA repair protein RecO (251 aa).

It belongs to the RecO family.

In terms of biological role, involved in DNA repair and RecF pathway recombination. This Acetivibrio thermocellus (strain ATCC 27405 / DSM 1237 / JCM 9322 / NBRC 103400 / NCIMB 10682 / NRRL B-4536 / VPI 7372) (Clostridium thermocellum) protein is DNA repair protein RecO.